A 310-amino-acid chain; its full sequence is GMP synthase [glutamine-hydrolyzing] subunit B (310 aa).

Residues 2 to 185 (FKTEPFIEES…LGLPDQIAHR (184 aa)) form the GMPS ATP-PPase domain. ATP is bound at residue 29-35 (SGGVDSS).

Heterodimer composed of a glutamine amidotransferase subunit (A) and a GMP-binding subunit (B).

The enzyme catalyses XMP + L-glutamine + ATP + H2O = GMP + L-glutamate + AMP + diphosphate + 2 H(+). The protein operates within purine metabolism; GMP biosynthesis; GMP from XMP (L-Gln route): step 1/1. Catalyzes the synthesis of GMP from XMP. In Methanococcus maripaludis (strain C7 / ATCC BAA-1331), this protein is GMP synthase [glutamine-hydrolyzing] subunit B.